The chain runs to 140 residues: Large-conductance mechanosensitive channel (140 aa).

Helical transmembrane passes span 16–36 (VIDL…VTAL) and 84–104 (INTV…VKLI).

It belongs to the MscL family. As to quaternary structure, homopentamer.

The protein localises to the cell inner membrane. Functionally, channel that opens in response to stretch forces in the membrane lipid bilayer. May participate in the regulation of osmotic pressure changes within the cell. This is Large-conductance mechanosensitive channel from Xanthomonas oryzae pv. oryzae (strain PXO99A).